A 553-amino-acid chain; its full sequence is Putative ABC transporter ATP-binding protein BCE_3323 (553 aa).

ABC transporter domains follow at residues 7–245 (AEIN…FRPF) and 295–527 (LSAE…SINR). ATP-binding positions include 41 to 48 (GGSGSGKT) and 329 to 336 (GKNGTGKS).

It belongs to the ABC transporter superfamily.

It localises to the cell membrane. Probably part of an ABC transporter complex. Responsible for energy coupling to the transport system. This is Putative ABC transporter ATP-binding protein BCE_3323 from Bacillus cereus (strain ATCC 10987 / NRS 248).